A 192-amino-acid polypeptide reads, in one-letter code: uncharacterized protein (192 aa).

The Nudix hydrolase domain occupies 29 to 160; the sequence is HRQAAVLIPI…PLDIYRRGDS (132 aa). A Nudix box motif is present at residues 67–89; sequence GAVDDTDASVIAAALREAEEEVA. Residues E83 and E87 each contribute to the Mg(2+) site.

This sequence belongs to the Nudix hydrolase family. PCD1 subfamily. Mn(2+) serves as cofactor. Mg(2+) is required as a cofactor.

Its function is as follows. Probably mediates the hydrolysis of some nucleoside diphosphate derivatives. This is an uncharacterized protein from Escherichia coli O139:H28 (strain E24377A / ETEC).